The primary structure comprises 197 residues: MKKIIVATKNKGKAKEFKEFFASFDIEAISLLDLPESIPDIEETGTTFEENAALKAEQISERFNTAVIADDSGLLIDALDGRPGLYSARYAGEPTNDQANIEKVLKEMQDVPDNDRSARFICVLAIAQPGKETNFCTGYCEGHIHSKQKGDHGFGYDPIFIPKKYDVTMAELDPAKKNQISHRKNAIDQLEKWLHTI.

Residue 8-13 (TKNKGK) participates in substrate binding. 2 residues coordinate Mg(2+): E42 and D71. The active-site Proton acceptor is D71. Substrate is bound by residues S72, 154–157 (FGYD), K177, and 182–183 (HR).

Belongs to the HAM1 NTPase family. As to quaternary structure, homodimer. Mg(2+) serves as cofactor.

It carries out the reaction XTP + H2O = XMP + diphosphate + H(+). It catalyses the reaction dITP + H2O = dIMP + diphosphate + H(+). The enzyme catalyses ITP + H2O = IMP + diphosphate + H(+). Pyrophosphatase that catalyzes the hydrolysis of nucleoside triphosphates to their monophosphate derivatives, with a high preference for the non-canonical purine nucleotides XTP (xanthosine triphosphate), dITP (deoxyinosine triphosphate) and ITP. Seems to function as a house-cleaning enzyme that removes non-canonical purine nucleotides from the nucleotide pool, thus preventing their incorporation into DNA/RNA and avoiding chromosomal lesions. The polypeptide is dITP/XTP pyrophosphatase (Oceanobacillus iheyensis (strain DSM 14371 / CIP 107618 / JCM 11309 / KCTC 3954 / HTE831)).